Reading from the N-terminus, the 223-residue chain is DNA-directed RNA polymerase III subunit RPC7 (223 aa).

A disordered region spans residues 110-223 (MMPRNKCKKA…SDDNMDEATY (114 aa)). Basic residues predominate over residues 114–125 (NKCKKAGPKPKK). The residue at position 133 (T133) is a Phosphothreonine. Residues 140–155 (DVLKKMEELEKRGDGE) are compositionally biased toward basic and acidic residues. A Phosphoserine modification is found at S157. Residues 164–173 (KEGSKEKSKE) show a composition bias toward basic and acidic residues. 2 stretches are compositionally biased toward acidic residues: residues 174–198 (GDDD…EEND) and 205–223 (EDGD…EATY).

Belongs to the eukaryotic RPC7 RNA polymerase subunit family. As to quaternary structure, component of the RNA polymerase III complex consisting of 17 subunits: a ten-subunit horseshoe-shaped catalytic core composed of POLR3A/RPC1, POLR3B/RPC2, POLR1C/RPAC1, POLR1D/RPAC2, POLR3K/RPC10, POLR2E/RPABC1, POLR2F/RPABC2, POLR2H/RPABC3, POLR2K/RPABC4 and POLR2L/RPABC5; a mobile stalk composed of two subunits POLR3H/RPC8 and CRCP/RPC9, protruding from the core and functioning primarily in transcription initiation; and additional subunits homologous to general transcription factors of the RNA polymerase II machinery, POLR3C/RPC3-POLR3F/RPC6-POLR3G/RPC7 heterotrimer required for transcription initiation and POLR3D/RPC4-POLR3E/RPC5 heterodimer involved in both transcription initiation and termination. Directly interacts with POLR3C/RPC62. Also found in a trimeric complex with POLR3C/RPC3 and POLR3GL. Barely detectable in differentiated tissues. Expressed in embryonic stem cells and in other dividing cells, such as some tumor cell lines.

Its subcellular location is the nucleus. It localises to the cytoplasm. Its function is as follows. DNA-dependent RNA polymerase catalyzes the transcription of DNA into RNA using the four ribonucleoside triphosphates as substrates. Specific peripheric component of RNA polymerase III (Pol III) which synthesizes small non-coding RNAs including 5S rRNA, snRNAs, tRNAs and miRNAs from at least 500 distinct genomic loci. Acts as a long tether that bridges POLR3C/RPC3-POLR3F/RPC6-POLR3G/RPC7 heterotrimer and the mobile stalk of Pol III, coordinating the dynamics of Pol III stalk and clamp modules during the transition from apo to elongation state. Pol III exists as two alternative complexes defined by the mutually exclusive incorporation of subunit POLR3G/RPC7alpha or POLR3GL/RPC7beta. POLR3G/RPC7alpha modulates Pol III transcriptome by specifically enhancing the transcription of snaR-A non-coding RNAs. At resting state, occupies the active site of apo Pol III and keeps Pol III in an autoinhibitory mode, preventing non-specific transcription. Pol III plays a key role in sensing and limiting infection by intracellular bacteria and DNA viruses. Acts as a nuclear and cytosolic DNA sensor involved in innate immune response. Can sense non-self dsDNA that serves as template for transcription into dsRNA. The non-self RNA polymerase III transcripts, such as Epstein-Barr virus-encoded RNAs (EBERs), induce type I interferon and NF-kappa-B through the RIG-I pathway. This chain is DNA-directed RNA polymerase III subunit RPC7, found in Homo sapiens (Human).